The following is a 149-amino-acid chain: Transcriptional regulator MraZ (149 aa).

SpoVT-AbrB domains follow at residues 7–54 and 83–126; these read KYVN…GISH and AVQL…QPQN.

Belongs to the MraZ family. Forms oligomers.

It is found in the cytoplasm. Its subcellular location is the nucleoid. This is Transcriptional regulator MraZ from Rickettsia akari (strain Hartford).